A 372-amino-acid polypeptide reads, in one-letter code: Cobalt-precorrin-5B C(1)-methyltransferase (372 aa).

The protein belongs to the CbiD family.

It catalyses the reaction Co-precorrin-5B + S-adenosyl-L-methionine = Co-precorrin-6A + S-adenosyl-L-homocysteine. The protein operates within cofactor biosynthesis; adenosylcobalamin biosynthesis; cob(II)yrinate a,c-diamide from sirohydrochlorin (anaerobic route): step 6/10. Its function is as follows. Catalyzes the methylation of C-1 in cobalt-precorrin-5B to form cobalt-precorrin-6A. This is Cobalt-precorrin-5B C(1)-methyltransferase from Geobacillus thermodenitrificans (strain NG80-2).